Consider the following 244-residue polypeptide: Lymphotoxin-beta (244 aa).

The Cytoplasmic segment spans residues Met1 to Ser18. A helical; Signal-anchor for type II membrane protein transmembrane segment spans residues Leu19–Pro48. Residues Gln49–Gly244 are Extracellular-facing. One can recognise a THD domain in the interval Pro88–Val243. A glycan (N-linked (GlcNAc...) asparagine) is linked at Asn222.

This sequence belongs to the tumor necrosis factor family. As to quaternary structure, heterotrimer of either two LTB and one LTA subunits or (less prevalent) one LTB and two LTA subunits. In terms of tissue distribution, spleen and thymus.

It localises to the membrane. Cytokine that binds to LTBR/TNFRSF3. May play a specific role in immune response regulation. Provides the membrane anchor for the attachment of the heterotrimeric complex to the cell surface. Isoform 2 is probably non-functional. This Homo sapiens (Human) protein is Lymphotoxin-beta (LTB).